Reading from the N-terminus, the 147-residue chain is uncharacterized protein (147 aa).

The tract at residues 30-102 is disordered; sequence GRCEQVALSS…TPPTRPESIF (73 aa). Polar residues predominate over residues 62–71; sequence RPSTGETFVQ.

This is an uncharacterized protein from Homo sapiens (Human).